An 89-amino-acid chain; its full sequence is Small ribosomal subunit protein uS15 (89 aa).

This sequence belongs to the universal ribosomal protein uS15 family. Part of the 30S ribosomal subunit. Forms a bridge to the 50S subunit in the 70S ribosome, contacting the 23S rRNA.

In terms of biological role, one of the primary rRNA binding proteins, it binds directly to 16S rRNA where it helps nucleate assembly of the platform of the 30S subunit by binding and bridging several RNA helices of the 16S rRNA. Functionally, forms an intersubunit bridge (bridge B4) with the 23S rRNA of the 50S subunit in the ribosome. The protein is Small ribosomal subunit protein uS15 of Bifidobacterium adolescentis (strain ATCC 15703 / DSM 20083 / NCTC 11814 / E194a).